The sequence spans 933 residues: Isoleucine--tRNA ligase (933 aa).

The 'HIGH' region motif lies at 57-67 (PYANGNIHVGH). Residue glutamate 554 coordinates L-isoleucyl-5'-AMP. The 'KMSKS' region signature appears at 595–599 (KMSKS). ATP is bound at residue lysine 598.

This sequence belongs to the class-I aminoacyl-tRNA synthetase family. IleS type 1 subfamily. As to quaternary structure, monomer.

The protein localises to the cytoplasm. The enzyme catalyses tRNA(Ile) + L-isoleucine + ATP = L-isoleucyl-tRNA(Ile) + AMP + diphosphate. Functionally, catalyzes the attachment of isoleucine to tRNA(Ile). As IleRS can inadvertently accommodate and process structurally similar amino acids such as valine, to avoid such errors it has two additional distinct tRNA(Ile)-dependent editing activities. One activity is designated as 'pretransfer' editing and involves the hydrolysis of activated Val-AMP. The other activity is designated 'posttransfer' editing and involves deacylation of mischarged Val-tRNA(Ile). In Streptococcus pyogenes serotype M6 (strain ATCC BAA-946 / MGAS10394), this protein is Isoleucine--tRNA ligase.